A 306-amino-acid chain; its full sequence is Diacylglycerol kinase (306 aa).

In terms of domain architecture, DAGKc spans 1-132 (MRKRARIIYN…VDIGKMNSRY (132 aa)). ATP-binding positions include 10–14 (NPTSG), Thr41, 67–73 (GDGTLNE), and Thr94. Mg(2+) is bound by residues Arg213, Asp216, and Tyr218. The Proton acceptor role is filled by Glu273.

This sequence belongs to the diacylglycerol/lipid kinase family. Homodimer. Mg(2+) is required as a cofactor.

The enzyme catalyses a 1,2-diacyl-sn-glycerol + ATP = a 1,2-diacyl-sn-glycero-3-phosphate + ADP + H(+). Its function is as follows. Catalyzes the phosphorylation of diacylglycerol (DAG) into phosphatidic acid. Is a key enzyme involved in the production of lipoteichoic acid by reintroducing DAG formed from the breakdown of membrane phospholipids into the phosphatidylglycerol biosynthetic pathway. The protein is Diacylglycerol kinase (dagK) of Staphylococcus carnosus (strain TM300).